The sequence spans 78 residues: RNA-binding protein Hfq (78 aa).

Residues 10–70 form the Sm domain; that stretch reads DLFLNSVRKQ…ISTIMPSQPV (61 aa).

This sequence belongs to the Hfq family. As to quaternary structure, homohexamer.

Functionally, RNA chaperone that binds small regulatory RNA (sRNAs) and mRNAs to facilitate mRNA translational regulation in response to envelope stress, environmental stress and changes in metabolite concentrations. Also binds with high specificity to tRNAs. The sequence is that of RNA-binding protein Hfq from Brucella abortus (strain S19).